The primary structure comprises 226 residues: Ribose-5-phosphate isomerase A (226 aa).

Residues 26-29, 82-85, and 95-98 each bind substrate; these read TGST, DGAD, and KGGG. Glutamate 104 (proton acceptor) is an active-site residue. Lysine 122 contributes to the substrate binding site.

The protein belongs to the ribose 5-phosphate isomerase family. Homodimer.

It catalyses the reaction aldehydo-D-ribose 5-phosphate = D-ribulose 5-phosphate. The protein operates within carbohydrate degradation; pentose phosphate pathway; D-ribose 5-phosphate from D-ribulose 5-phosphate (non-oxidative stage): step 1/1. In terms of biological role, catalyzes the reversible conversion of ribose-5-phosphate to ribulose 5-phosphate. This chain is Ribose-5-phosphate isomerase A, found in Streptococcus uberis (strain ATCC BAA-854 / 0140J).